A 213-amino-acid polypeptide reads, in one-letter code: ATP-dependent Clp protease proteolytic subunit (213 aa).

The Nucleophile role is filled by Ser114. The active site involves His139.

Belongs to the peptidase S14 family. As to quaternary structure, fourteen ClpP subunits assemble into 2 heptameric rings which stack back to back to give a disk-like structure with a central cavity, resembling the structure of eukaryotic proteasomes.

Its subcellular location is the cytoplasm. It catalyses the reaction Hydrolysis of proteins to small peptides in the presence of ATP and magnesium. alpha-casein is the usual test substrate. In the absence of ATP, only oligopeptides shorter than five residues are hydrolyzed (such as succinyl-Leu-Tyr-|-NHMec, and Leu-Tyr-Leu-|-Tyr-Trp, in which cleavage of the -Tyr-|-Leu- and -Tyr-|-Trp bonds also occurs).. In terms of biological role, cleaves peptides in various proteins in a process that requires ATP hydrolysis. Has a chymotrypsin-like activity. Plays a major role in the degradation of misfolded proteins. In Pseudomonas entomophila (strain L48), this protein is ATP-dependent Clp protease proteolytic subunit.